Consider the following 140-residue polypeptide: GTP-dependent dephospho-CoA kinase (140 aa).

Residues D21, V22, V23, D40, K42, and E92 each contribute to the GTP site.

It belongs to the GTP-dependent DPCK family.

The catalysed reaction is 3'-dephospho-CoA + GTP = GDP + CoA + H(+). It participates in cofactor biosynthesis; coenzyme A biosynthesis. Functionally, catalyzes the GTP-dependent phosphorylation of the 3'-hydroxyl group of dephosphocoenzyme A to form coenzyme A (CoA). The chain is GTP-dependent dephospho-CoA kinase from Pyrobaculum aerophilum (strain ATCC 51768 / DSM 7523 / JCM 9630 / CIP 104966 / NBRC 100827 / IM2).